The primary structure comprises 401 residues: Argininosuccinate synthase (401 aa).

Position 8–16 (8–16 (AYSGGLDTS)) interacts with ATP. Tyr85 is an L-citrulline binding site. Position 115 (Gly115) interacts with ATP. Residues Thr117, Asn121, and Asp122 each contribute to the L-aspartate site. Residue Asn121 coordinates L-citrulline. Residues Arg125, Ser173, Glu258, and Tyr270 each contribute to the L-citrulline site.

Belongs to the argininosuccinate synthase family. Type 1 subfamily. In terms of assembly, homotetramer.

The protein localises to the cytoplasm. It catalyses the reaction L-citrulline + L-aspartate + ATP = 2-(N(omega)-L-arginino)succinate + AMP + diphosphate + H(+). It functions in the pathway amino-acid biosynthesis; L-arginine biosynthesis; L-arginine from L-ornithine and carbamoyl phosphate: step 2/3. The protein is Argininosuccinate synthase of Staphylococcus carnosus (strain TM300).